Consider the following 348-residue polypeptide: Protein DMR6-LIKE OXYGENASE 2 (348 aa).

The Fe2OG dioxygenase domain occupies 194–294 (KHGQHMAINY…RISIPTFYCP (101 aa)). 3 residues coordinate Fe cation: histidine 219, aspartate 221, and histidine 275. Residue arginine 285 participates in 2-oxoglutarate binding.

It belongs to the iron/ascorbate-dependent oxidoreductase family. The cofactor is Fe(2+).

It carries out the reaction salicylate + NADH + O2 + H(+) = 2,3-dihydroxybenzoate + NAD(+) + H2O. Functionally, converts salicylic acid (SA) to 2,3-dihydroxybenzoic acid (2,3-DHBA). Negative regulator of defense against Hyaloperonospora arabidopsidis. (Microbial infection) Confers susceptibility to the downy mildew pathogen Hyaloperonospora arabidopsidis. The polypeptide is Protein DMR6-LIKE OXYGENASE 2 (Arabidopsis thaliana (Mouse-ear cress)).